Here is a 510-residue protein sequence, read N- to C-terminus: Bifunctional pantoate ligase/cytidylate kinase (510 aa).

Residues 1 to 276 (MKKVIIRKTE…CGETRLIDHV (276 aa)) are pantoate--beta-alanine ligase. An ATP-binding site is contributed by 29–36 (MGNLHNGH). Residue histidine 36 is the Proton donor of the active site. Glutamine 61 contributes to the (R)-pantoate binding site. A beta-alanine-binding site is contributed by glutamine 61. 150–153 (GEKD) contacts ATP. Position 156 (glutamine 156) interacts with (R)-pantoate. Position 187-190 (187-190 (LSSR)) interacts with ATP. The tract at residues 277-510 (FLMKRRPIIA…DKIPKETEIK (234 aa)) is cytidylate kinase.

It in the N-terminal section; belongs to the pantothenate synthetase family. This sequence in the C-terminal section; belongs to the cytidylate kinase family. Type 1 subfamily.

It is found in the cytoplasm. It carries out the reaction (R)-pantoate + beta-alanine + ATP = (R)-pantothenate + AMP + diphosphate + H(+). The catalysed reaction is CMP + ATP = CDP + ADP. It catalyses the reaction dCMP + ATP = dCDP + ADP. It functions in the pathway cofactor biosynthesis; (R)-pantothenate biosynthesis; (R)-pantothenate from (R)-pantoate and beta-alanine: step 1/1. Its function is as follows. Catalyzes the condensation of pantoate with beta-alanine in an ATP-dependent reaction via a pantoyl-adenylate intermediate. Functionally, catalyzes the transfer of a phosphate group from ATP to either CMP or dCMP to form CDP or dCDP and ADP, respectively. The sequence is that of Bifunctional pantoate ligase/cytidylate kinase from Prochlorococcus marinus (strain MIT 9215).